Reading from the N-terminus, the 353-residue chain is DNA integrity scanning protein DisA (353 aa).

In terms of domain architecture, DAC spans 6-144 (DKELMNILKI…GGIKYVLRDS (139 aa)). Residues Gly-73, Leu-91, and 104-108 (TRHRT) contribute to the ATP site.

It belongs to the DisA family. Homooctamer. Mg(2+) is required as a cofactor.

The enzyme catalyses 2 ATP = 3',3'-c-di-AMP + 2 diphosphate. In terms of biological role, participates in a DNA-damage check-point that is active prior to asymmetric division when DNA is damaged. DisA forms globular foci that rapidly scan along the chromosomes during sporulation, searching for lesions. When a lesion is present, DisA pauses at the lesion site. This triggers a cellular response that culminates in a temporary block in sporulation initiation. Functionally, also has diadenylate cyclase activity, catalyzing the condensation of 2 ATP molecules into cyclic di-AMP (c-di-AMP). c-di-AMP acts as a signaling molecule that couples DNA integrity with progression of sporulation. The rise in c-di-AMP level generated by DisA while scanning the chromosome, operates as a positive signal that advances sporulation; upon encountering a lesion, the DisA focus arrests at the damaged site and halts c-di-AMP synthesis. The sequence is that of DNA integrity scanning protein DisA from Clostridium botulinum (strain Loch Maree / Type A3).